Consider the following 111-residue polypeptide: Large ribosomal subunit protein P2B (111 aa).

The segment at 62-111 (LASVPSGGAAAGGASASTGAAAGGAAEAEEEKEEEAKEESDDDMGFGLFD) is disordered. Positions 67–87 (SGGAAAGGASASTGAAAGGAA) are enriched in low complexity. The span at 88-105 (EAEEEKEEEAKEESDDDM) shows a compositional bias: acidic residues. At Ser-101 the chain carries Phosphoserine.

The protein belongs to the eukaryotic ribosomal protein P1/P2 family.

Plays an important role in the elongation step of protein synthesis. The sequence is that of Large ribosomal subunit protein P2B (RPP2B) from Candida albicans (Yeast).